A 73-amino-acid chain; its full sequence is DNA gyrase inhibitor YacG (73 aa).

Positions 12, 15, 31, and 35 each coordinate Zn(2+). The tract at residues 47–73 (DYAIPGEPIDPAEPSEDRNGAEGPPTD) is disordered.

It belongs to the DNA gyrase inhibitor YacG family. Interacts with GyrB. The cofactor is Zn(2+).

Its function is as follows. Inhibits all the catalytic activities of DNA gyrase by preventing its interaction with DNA. Acts by binding directly to the C-terminal domain of GyrB, which probably disrupts DNA binding by the gyrase. The protein is DNA gyrase inhibitor YacG of Methylococcus capsulatus (strain ATCC 33009 / NCIMB 11132 / Bath).